A 438-amino-acid chain; its full sequence is Fibrinogen gamma chain (438 aa).

The first 25 residues, 1–25, serve as a signal peptide directing secretion; sequence MTRLPKQGLLLLQSLALLSSAFGNI. Asn-76 carries an N-linked (GlcNAc...) asparagine glycan. The Fibrinogen C-terminal domain occupies 167–414; the sequence is QIQEFTGKDC…SVTMKIMPLN (248 aa). Cys-176 and Cys-205 form a disulfide bridge. Positions 341, 343, and 347 each coordinate Ca(2+). Cys-349 and Cys-362 are disulfide-bonded.

As to quaternary structure, heterohexamer; disulfide linked. Contains 2 sets of 3 non-identical chains (alpha, beta and gamma). The 2 heterotrimers are in head to head conformation with the N-termini in a small central domain. Conversion of fibrinogen to fibrin is triggered by thrombin, which cleaves fibrinopeptides A and B from alpha and beta chains, and thus exposes the N-terminal polymerization sites responsible for the formation of the soft clot. The soft clot is converted into the hard clot by factor XIIIA which catalyzes the epsilon-(gamma-glutamyl)lysine cross-linking between gamma chains (stronger) and between alpha chains (weaker) of different monomers.

Its subcellular location is the secreted. Its function is as follows. Together with fibrinogen alpha (FGA) and fibrinogen beta (FGB), polymerizes to form an insoluble fibrin matrix. Has a major function in hemostasis as one of the primary components of blood clots. In Xenopus laevis (African clawed frog), this protein is Fibrinogen gamma chain (fgg).